The chain runs to 187 residues: Alpha-D-galactose-binding lectin (187 aa).

A signal peptide spans 1 to 37 (MTFAKQSCFNSIILLSIATSYFKIGHKISELGNRIEK). N-acetylthreonine is present on T39. N-acetyl-alpha-D-galactosamine-binding positions include 53–56 (HPKG), D64, 72–76 (DIHER), H101, G104, E112, 120–122 (DRH), H145, G148, E156, and 164–166 (DKH).

Homodimer. As to expression, highest expression in the posterior part of the mantle. Highly expressed in gills and to a lesser extent in mid mantle and anterior muscle. Lowest expression in digestive gland and posterior adductor muscle. Scarcely detectable in hemocytes.

Its activity is regulated as follows. Agglutination of E.coli is inhibited by alpha-galactoside melibiose, but not by beta-galactoside lactose. Alpha-D-galactose-binding lectin. Binds D-GalNAc, but not glucose or its derivatives. Has hemagglutinating activity towards rabbit erythrocytes. Agglutinates bacteria. Has bacteriostatic activity on both Gram-positive and Gram-negative bacteria including B.subtilis, S.aureus, E.coli and V.parahaemolyticus, respectively. Has a dose-dependent cytotoxic effect on the human globotriaosylceramide (Gb3)-expressing Epstein-Barr virus (EBV)-positive Burkitt's lymphoma (Raji) cell line. Has dose-dependent cytotoxic effect on another Burkitt's lymphoma (Ramos) cell line, which does not possess the EBV genome, but also expresses Gb3. Binds to Gb3 in these cells leading to phosphorylation of MEK1/2, ERK1/2, JNK and p38 kinase, activation of caspase-9/3 and to expression of p21 and tumor necrosis factor (TNF)-alpha. No cytotoxic effect on the human chronic myelogenous leukemia (K-562) cell line, which does not express Gb3. May be involved in innate immunity acting as an antibacterial or antifungal agent. May be a pattern recognition receptor (PRR) involved in recognition of glycans found on parasitic or symbiotic microorganisms. In Mytilus galloprovincialis (Mediterranean mussel), this protein is Alpha-D-galactose-binding lectin.